A 552-amino-acid polypeptide reads, in one-letter code: Carboxypeptidase Y homolog A (552 aa).

Positions 1 to 18 (MRIATSTLLVGAASAAFA) are cleaved as a signal peptide. Positions 19–133 (PQDGTQRVLN…KLDNYNLRAR (115 aa)) are excised as a propeptide. Disulfide bonds link Cys187–Cys427, Cys321–Cys335, Cys345–Cys368, Cys352–Cys361, and Cys390–Cys397. Residue Asn218 is glycosylated (N-linked (GlcNAc...) asparagine). The active site involves Ser274. Asp466 is a catalytic residue. Residue Asn516 is glycosylated (N-linked (GlcNAc...) asparagine). Residue His527 is part of the active site.

Belongs to the peptidase S10 family.

It localises to the vacuole. It catalyses the reaction Release of a C-terminal amino acid with broad specificity.. Its function is as follows. Vacuolar carboxypeptidase involved in degradation of small peptides. Digests preferentially peptides containing an aliphatic or hydrophobic residue in P1' position, as well as methionine, leucine or phenylalanine in P1 position of ester substrate. In Pyricularia oryzae (strain 70-15 / ATCC MYA-4617 / FGSC 8958) (Rice blast fungus), this protein is Carboxypeptidase Y homolog A (CPYA).